Consider the following 272-residue polypeptide: 1,4-dihydroxy-2-naphthoyl-CoA synthase (272 aa).

Substrate contacts are provided by residues Arg-33, 72–76 (SGGDQ), Tyr-84, 116–120 (YAIGG), Thr-142, Ser-148, Tyr-245, and Lys-260. 141–143 (QTG) contacts hydrogencarbonate.

Belongs to the enoyl-CoA hydratase/isomerase family. MenB subfamily. Hydrogencarbonate is required as a cofactor.

The catalysed reaction is 2-succinylbenzoyl-CoA + H(+) = 1,4-dihydroxy-2-naphthoyl-CoA + H2O. The protein operates within quinol/quinone metabolism; 1,4-dihydroxy-2-naphthoate biosynthesis; 1,4-dihydroxy-2-naphthoate from chorismate: step 6/7. Its pathway is quinol/quinone metabolism; menaquinone biosynthesis. Functionally, converts o-succinylbenzoyl-CoA (OSB-CoA) to 1,4-dihydroxy-2-naphthoyl-CoA (DHNA-CoA). The sequence is that of 1,4-dihydroxy-2-naphthoyl-CoA synthase from Staphylococcus epidermidis (strain ATCC 35984 / DSM 28319 / BCRC 17069 / CCUG 31568 / BM 3577 / RP62A).